We begin with the raw amino-acid sequence, 376 residues long: Rhodopsin (376 aa).

Residues Met-1–Met-52 lie on the Extracellular side of the membrane. Asn-23 is a glycosylation site (N-linked (GlcNAc...) asparagine). Residues Tyr-53 to Val-77 traverse the membrane as a helical segment. Residues Phe-78–Asn-89 are Cytoplasmic-facing. The chain crosses the membrane as a helical span at residues Leu-90–Val-112. Residues Thr-113–Cys-126 lie on the Extracellular side of the membrane. Residues Cys-126 and Cys-203 are joined by a disulfide bond. The chain crosses the membrane as a helical span at residues Gln-127 to Phe-149. The 'Ionic lock' involved in activated form stabilization motif lies at Asp-150–Tyr-152. Residues Asp-150–Lys-168 are Cytoplasmic-facing. Residues Ala-169–Phe-189 form a helical membrane-spanning segment. The Extracellular segment spans residues Gly-190–Ser-216. Asn-199 is a glycosylation site (N-linked (GlcNAc...) asparagine). The chain crosses the membrane as a helical span at residues Tyr-217–Val-237. Topologically, residues Ser-238–Lys-278 are cytoplasmic. The helical transmembrane segment at Ile-279–Val-300 threads the bilayer. Residues Gly-301–Val-311 lie on the Extracellular side of the membrane. A helical membrane pass occupies residues Tyr-312 to Ile-333. Lys-321 bears the N6-(retinylidene)lysine mark. Residues Ser-334–Ala-376 are Cytoplasmic-facing. The interval Thr-353 to Ala-376 is disordered.

Belongs to the G-protein coupled receptor 1 family. Opsin subfamily. In terms of assembly, homodimer. Interacts with GNAQ. Post-translationally, contains one covalently linked retinal chromophore. In terms of tissue distribution, detected on rhabdomere membranes on photoreceptor cells in the retina (at protein level).

The protein resides in the cell projection. It localises to the rhabdomere membrane. Photoreceptor required for image-forming vision at low light intensity. Can use both retinal and 3-dehydroretinal as visual pigment. Light-induced isomerization of 11-cis to all-trans retinal triggers a conformational change that activates signaling via G-proteins. Signaling via GNAQ probably mediates the activation of phospholipase C. In Procambarus clarkii (Red swamp crayfish), this protein is Rhodopsin (RHO).